The chain runs to 231 residues: Two-component response regulator ARR3 (231 aa).

In terms of domain architecture, Response regulatory spans H34–T161. D94 bears the 4-aspartylphosphate mark. The disordered stretch occupies residues G170–A231. Positions S185–S199 are enriched in low complexity. The segment covering L210 to V221 has biased composition (polar residues).

The protein belongs to the ARR family. Type-A subfamily. In terms of processing, two-component system major event consists of a His-to-Asp phosphorelay between a sensor histidine kinase (HK) and a response regulator (RR). In plants, the His-to-Asp phosphorelay involves an additional intermediate named Histidine-containing phosphotransfer protein (HPt). This multistep phosphorelay consists of a His-Asp-His-Asp sequential transfer of a phosphate group between first a His and an Asp of the HK protein, followed by the transfer to a conserved His of the HPt protein and finally the transfer to an Asp in the receiver domain of the RR protein. In terms of tissue distribution, predominantly expressed in roots.

It is found in the nucleus. Functionally, functions as a response regulator involved in His-to-Asp phosphorelay signal transduction system. Phosphorylation of the Asp residue in the receiver domain activates the ability of the protein to promote the transcription of target genes. Type-A response regulators seem to act as negative regulators of the cytokinin signaling. This Arabidopsis thaliana (Mouse-ear cress) protein is Two-component response regulator ARR3 (ARR3).